The following is a 256-amino-acid chain: 4-oxalocrotonate decarboxylase (256 aa).

This sequence belongs to the hydratase/decarboxylase family. As to quaternary structure, forms a complex with AmnF. Mg(2+) serves as cofactor. It depends on Mn(2+) as a cofactor.

It carries out the reaction (3E)-2-oxohex-3-enedioate + H(+) = 2-oxopent-4-enoate + CO2. Its activity is regulated as follows. Strongly inhibited by Fe(2+), Fe(3+), K(3)[Fe(CN)(6)], Ag(+) and Cu(2+). Involved in the modified meta-cleavage pathway for the 2-aminophenol catabolism. This chain is 4-oxalocrotonate decarboxylase (amnE), found in Pseudomonas sp.